The chain runs to 89 residues: Acylphosphatase (89 aa).

Residues 3-89 (HIHLQVFGRV…NQKLSDFRSI (87 aa)) enclose the Acylphosphatase-like domain. Residues Arg-18 and Asn-36 contribute to the active site.

This sequence belongs to the acylphosphatase family.

It carries out the reaction an acyl phosphate + H2O = a carboxylate + phosphate + H(+). This chain is Acylphosphatase (acyP), found in Staphylococcus aureus (strain Mu3 / ATCC 700698).